A 197-amino-acid chain; its full sequence is Molybdenum cofactor guanylyltransferase (197 aa).

Residues 10-12, Lys23, Asn51, Asp69, and Asp99 contribute to the GTP site; that span reads LAG. Asp99 lines the Mg(2+) pocket.

Belongs to the MobA family. Monomer. Mg(2+) serves as cofactor.

It localises to the cytoplasm. The catalysed reaction is Mo-molybdopterin + GTP + H(+) = Mo-molybdopterin guanine dinucleotide + diphosphate. Transfers a GMP moiety from GTP to Mo-molybdopterin (Mo-MPT) cofactor (Moco or molybdenum cofactor) to form Mo-molybdopterin guanine dinucleotide (Mo-MGD) cofactor. The protein is Molybdenum cofactor guanylyltransferase of Shewanella sp. (strain ANA-3).